Here is a 496-residue protein sequence, read N- to C-terminus: Adenosine transporter 1 (496 aa).

Residues Met-1–Glu-26 are Cytoplasmic-facing. Residues Phe-27 to Val-47 form a helical membrane-spanning segment. The Extracellular portion of the chain corresponds to Phe-48 to Asn-77. The helical transmembrane segment at Val-78–Leu-98 threads the bilayer. Over Leu-99–Met-107 the chain is Cytoplasmic. The chain crosses the membrane as a helical span at residues Leu-108 to Val-128. At Pro-129–Glu-135 the chain is on the extracellular side. The chain crosses the membrane as a helical span at residues Gly-136 to Phe-156. The Cytoplasmic portion of the chain corresponds to Glu-157 to Thr-172. A helical membrane pass occupies residues Ser-173–Val-193. At Lys-194 to Ser-208 the chain is on the extracellular side. The chain crosses the membrane as a helical span at residues Tyr-209–Met-229. Over Arg-230–Lys-336 the chain is Cytoplasmic. A helical transmembrane segment spans residues Trp-337 to Ala-357. Residues Thr-358 to Lys-365 lie on the Extracellular side of the membrane. The helical transmembrane segment at Trp-366–Pro-386 threads the bilayer. At Ala-387–Arg-399 the chain is on the cytoplasmic side. A helical transmembrane segment spans residues Trp-400 to Ser-420. Over Tyr-421 to Tyr-431 the chain is Extracellular. Residues Val-432 to Gly-452 traverse the membrane as a helical segment. Over Pro-453–Arg-464 the chain is Cytoplasmic. Residues Phe-465–Leu-485 traverse the membrane as a helical segment. The Extracellular segment spans residues Ser-486–Tyr-496.

It belongs to the SLC29A/ENT transporter (TC 2.A.57) family.

The protein localises to the membrane. The catalysed reaction is adenosine(in) = adenosine(out). Its function is as follows. Adenosine transporter. This Crithidia fasciculata protein is Adenosine transporter 1.